Reading from the N-terminus, the 280-residue chain is Feruloyl esterase 1 (280 aa).

The signal sequence occupies residues 1–20; the sequence is MKAFATRALAFSVAAGQALA. Cystine bridges form between cysteine 49–cysteine 278, cysteine 111–cysteine 114, and cysteine 247–cysteine 254. N-linked (GlcNAc...) asparagine glycosylation occurs at asparagine 99. Catalysis depends on serine 153, which acts as the Nucleophile. Catalysis depends on aspartate 214, which acts as the Charge relay system. Histidine 267 serves as the catalytic Charge relay system.

The protein belongs to the AB hydrolase superfamily. FaeA family. In terms of processing, glycosylated.

It is found in the secreted. The enzyme catalyses feruloyl-polysaccharide + H2O = ferulate + polysaccharide.. Metal or basic ions Mn(2+), Ni(+), Mg(2+), and NH(4)(+) decrease the activity by 4.4% to 14.1%. The enzymatic activity is inhibited by Zn(2+) at a low concentration (1 mM) but not a high concentration (5 mM). Loses about a quarter of activity by the addition of 1 mM of Cu(2+) or Fe(3+) and activity is completely suppressed when the concentration was up to 5 mM. Low concentrations (0.25 and 0.5 M) of NaCl improve the activity by 5.6 % or 8.3%, respectively. Involved in degradation of plant cell walls. Hydrolyzes the feruloyl-arabinose ester bond in arabinoxylans, and the feruloyl-galactose ester bond in pectin. This chain is Feruloyl esterase 1, found in Penicillium parvum (Eupenicillium parvum).